The chain runs to 198 residues: Glycerol-3-phosphate acyltransferase (198 aa).

The next 5 membrane-spanning stretches (helical) occupy residues 2-22, 53-73, 79-99, 113-133, and 152-172; these read IIDL…FGVL, LGFI…VIAT, PFMY…SCFL, VLIP…TFFI, and IILF…IMAL.

Belongs to the PlsY family. As to quaternary structure, probably interacts with PlsX.

The protein resides in the cell membrane. It catalyses the reaction an acyl phosphate + sn-glycerol 3-phosphate = a 1-acyl-sn-glycero-3-phosphate + phosphate. The protein operates within lipid metabolism; phospholipid metabolism. Functionally, catalyzes the transfer of an acyl group from acyl-phosphate (acyl-PO(4)) to glycerol-3-phosphate (G3P) to form lysophosphatidic acid (LPA). This enzyme utilizes acyl-phosphate as fatty acyl donor, but not acyl-CoA or acyl-ACP. The sequence is that of Glycerol-3-phosphate acyltransferase from Lawsonia intracellularis (strain PHE/MN1-00).